The chain runs to 449 residues: 5'-deoxyadenosine deaminase (449 aa).

Residues His79 and His81 each coordinate Zn(2+). Substrate contacts are provided by Glu108 and His200. His227 serves as a coordination point for Zn(2+). Residues Glu230 and Asp316 each coordinate substrate. Asp316 serves as a coordination point for Zn(2+).

It belongs to the metallo-dependent hydrolases superfamily. MTA/SAH deaminase family. In terms of assembly, homotetramer. It depends on Zn(2+) as a cofactor.

It carries out the reaction 5'-deoxyadenosine + H2O + H(+) = 5'-deoxyinosine + NH4(+). It catalyses the reaction S-adenosyl-L-homocysteine + H2O + H(+) = S-inosyl-L-homocysteine + NH4(+). The enzyme catalyses S-methyl-5'-thioadenosine + H2O + H(+) = S-methyl-5'-thioinosine + NH4(+). The catalysed reaction is adenosine + H2O + H(+) = inosine + NH4(+). Its pathway is amino-acid biosynthesis; S-adenosyl-L-methionine biosynthesis. In terms of biological role, catalyzes the deamination of three SAM-derived enzymatic products, namely 5'-deoxyadenosine, S-adenosyl-L-homocysteine, and 5'-methylthioadenosine, to produce the inosine analogs. Can also deaminate adenosine. The preferred substrate for this enzyme is 5'-deoxyadenosine, but all these substrates are efficiently deaminated. Likely functions in a S-adenosyl-L-methionine (SAM) recycling pathway from S-adenosyl-L-homocysteine (SAH) produced from SAM-dependent methylation reactions. May also be involved in the recycling of 5'-deoxyadenosine, whereupon the 5'-deoxyribose moiety of 5'-deoxyinosine is further metabolized to deoxyhexoses used for the biosynthesis of aromatic amino acids in methanogens. The protein is 5'-deoxyadenosine deaminase of Methanospirillum hungatei JF-1 (strain ATCC 27890 / DSM 864 / NBRC 100397 / JF-1).